Here is a 74-residue protein sequence, read N- to C-terminus: uncharacterized protein (74 aa).

2 consecutive transmembrane segments (helical) span residues 3-23 (YSAL…CFSF) and 35-55 (ILFF…MLLT).

The protein resides in the cell membrane. This is an uncharacterized protein from Mycoplasma genitalium (strain ATCC 33530 / DSM 19775 / NCTC 10195 / G37) (Mycoplasmoides genitalium).